Consider the following 47-residue polypeptide: Delta-ctenitoxin-Asp2e (47 aa).

5 disulfide bridges follow: cysteine 3/cysteine 17, cysteine 10/cysteine 23, cysteine 14/cysteine 46, cysteine 16/cysteine 31, and cysteine 25/cysteine 29.

Expressed by the venom gland.

The protein resides in the secreted. Its function is as follows. Inhibits the inactivation of voltage-gated sodium channels (Nav). In Ancylometes sp. (South American fishing spider), this protein is Delta-ctenitoxin-Asp2e.